We begin with the raw amino-acid sequence, 273 residues long: MTKLIIHLVSDSSVQTAKYTANSALAQFTSVKPKLYHWPMIRNLELLNEVLSKIEYKHGIVLYTIADQELRKTLTKFCYELKIPCISVIGKIIKEMSVFSGIEIEKEQNYNYKFDKTYFDTLNAIDYAIRHDDGQMLNELLEADIILIGPSRTSKTPTSVFLAYNGLKAANIPYVYNCPFPDFIEKDIDQLVVGLVINPNRLIEIREARLNLLQINENKSYTDFNIVQKECLEVRKICDQRNWPVIDVSTRSIEETAALIMRIYYNRKNKYNK.

Gly149–Thr156 contacts ADP.

This sequence belongs to the pyruvate, phosphate/water dikinase regulatory protein family. PDRP subfamily.

It carries out the reaction N(tele)-phospho-L-histidyl/L-threonyl-[pyruvate, phosphate dikinase] + ADP = N(tele)-phospho-L-histidyl/O-phospho-L-threonyl-[pyruvate, phosphate dikinase] + AMP + H(+). It catalyses the reaction N(tele)-phospho-L-histidyl/O-phospho-L-threonyl-[pyruvate, phosphate dikinase] + phosphate + H(+) = N(tele)-phospho-L-histidyl/L-threonyl-[pyruvate, phosphate dikinase] + diphosphate. Functionally, bifunctional serine/threonine kinase and phosphorylase involved in the regulation of the pyruvate, phosphate dikinase (PPDK) by catalyzing its phosphorylation/dephosphorylation. The sequence is that of Putative pyruvate, phosphate dikinase regulatory protein from Rickettsia africae (strain ESF-5).